We begin with the raw amino-acid sequence, 545 residues long: Hydroxylamine reductase (545 aa).

4 residues coordinate [4Fe-4S] cluster: C3, C6, C15, and C21. Hybrid [4Fe-2O-2S] cluster-binding residues include H241, E265, C309, C396, C424, C449, E483, and K485. Position 396 is a cysteine persulfide (C396).

It belongs to the HCP family. [4Fe-4S] cluster is required as a cofactor. Requires hybrid [4Fe-2O-2S] cluster as cofactor.

The protein localises to the cytoplasm. It carries out the reaction A + NH4(+) + H2O = hydroxylamine + AH2 + H(+). Catalyzes the reduction of hydroxylamine to form NH(3) and H(2)O. The chain is Hydroxylamine reductase from Zymomonas mobilis subsp. mobilis (strain ATCC 31821 / ZM4 / CP4).